The primary structure comprises 113 residues: MKTFAGFSFLFLWLQLDCMSRGEDVEQSLFLSVREGDSSVINCTYTDSSSTYLYWYKQEPGAGLQLLTYIFSNMDMKQDQRLTVLLNKKDKHLSLRIADTQTGDSAIYFCAES.

Positions 1–22 are cleaved as a signal peptide; that stretch reads MKTFAGFSFLFLWLQLDCMSRG. The 91-residue stretch at 23-113 folds into the Ig-like domain; sequence EDVEQSLFLS…DSAIYFCAES (91 aa). Residue Asn-42 is glycosylated (N-linked (GlcNAc...) asparagine). Cys-43 and Cys-110 are oxidised to a cystine.

As to quaternary structure, alpha-beta TR is a heterodimer composed of an alpha and beta chain; disulfide-linked. The alpha-beta TR is associated with the transmembrane signaling CD3 coreceptor proteins to form the TR-CD3 (TcR or TCR). The assembly of alpha-beta TR heterodimers with CD3 occurs in the endoplasmic reticulum where a single alpha-beta TR heterodimer associates with one CD3D-CD3E heterodimer, one CD3G-CD3E heterodimer and one CD247 homodimer forming a stable octameric structure. CD3D-CD3E and CD3G-CD3E heterodimers preferentially associate with TR alpha and TR beta chains, respectively. The association of the CD247 homodimer is the last step of TcR assembly in the endoplasmic reticulum and is required for transport to the cell surface.

Its subcellular location is the cell membrane. V region of the variable domain of T cell receptor (TR) alpha chain that participates in the antigen recognition. Alpha-beta T cell receptors are antigen specific receptors which are essential to the immune response and are present on the cell surface of T lymphocytes. Recognize peptide-major histocompatibility (MH) (pMH) complexes that are displayed by antigen presenting cells (APC), a prerequisite for efficient T cell adaptive immunity against pathogens. Binding of alpha-beta TR to pMH complex initiates TR-CD3 clustering on the cell surface and intracellular activation of LCK that phosphorylates the ITAM motifs of CD3G, CD3D, CD3E and CD247 enabling the recruitment of ZAP70. In turn ZAP70 phosphorylates LAT, which recruits numerous signaling molecules to form the LAT signalosome. The LAT signalosome propagates signal branching to three major signaling pathways, the calcium, the mitogen-activated protein kinase (MAPK) kinase and the nuclear factor NF-kappa-B (NF-kB) pathways, leading to the mobilization of transcription factors that are critical for gene expression and essential for T cell growth and differentiation. The T cell repertoire is generated in the thymus, by V-(D)-J rearrangement. This repertoire is then shaped by intrathymic selection events to generate a peripheral T cell pool of self-MH restricted, non-autoaggressive T cells. Post-thymic interaction of alpha-beta TR with the pMH complexes shapes TR structural and functional avidity. The sequence is that of T cell receptor alpha variable 5 from Homo sapiens (Human).